Consider the following 197-residue polypeptide: MSFLKKSLLLILFLGLVSLSVCKEEKRETEEENENEENHEEGSEMKRYMFHLMDGEAKKRDSEENEIEENHEEGSEMKRYAFGYPSGEAKKIKRVSEEENENEENHEEGSEMKRYAFGYPSGEAKKIKRESEEEKEIEENHEEGSEMKRYAFGYPSGEAKKIKRESEEENENEENHEEGSEMKRYAFGYPSGEAKKM.

A signal peptide spans 1-20 (MSFLKKSLLLILFLGLVSLS). The propeptide occupies 21–45 (VCKEEKRETEEENENEENHEEGSEM). The segment at 24 to 197 (EEKRETEEEN…GYPSGEAKKM (174 aa)) is disordered. The span at 30–39 (EEENENEENH) shows a compositional bias: acidic residues. Basic and acidic residues predominate over residues 40-62 (EEGSEMKRYMFHLMDGEAKKRDS). Position 49 is a D-methionine (M49). Position 54 is an aspartic acid 1-amide (D54). Positions 56-77 (EAKKRDSEENEIEENHEEGSEM) are excised as a propeptide. Residue A81 is modified to D-alanine (Ala). The residue at position 86 (S86) is a Serine amide. A compositionally biased stretch (basic and acidic residues) spans 88 to 97 (EAKKIKRVSE). Positions 88–112 (EAKKIKRVSEEENENEENHEEGSEM) are excised as a propeptide. A116 is modified (D-alanine (Ala)). Position 121 is a serine amide (S121). A compositionally biased stretch (basic and acidic residues) spans 123–132 (EAKKIKRESE). Positions 123–147 (EAKKIKRESEEEKEIEENHEEGSEM) are excised as a propeptide. Position 151 is a D-alanine (Ala) (A151). At S156 the chain carries Serine amide. Residues 158–182 (EAKKIKRESEEENENEENHEEGSEM) constitute a propeptide that is removed on maturation. Residues 167–176 (EEENENEENH) show a composition bias toward acidic residues. A186 is modified (D-alanine (Ala)). The residue at position 191 (S191) is a Serine amide. Residues 193 to 197 (EAKKM) constitute a propeptide that is removed on maturation.

This sequence belongs to the frog skin active peptide (FSAP) family. Dermorphin subfamily. Expressed by the skin glands.

It localises to the secreted. In terms of biological role, dermorphin has a very potent opiate-like activity. It has high affinity and selectivity for mu-type opioid receptors. Deltorphin has a very potent opiate-like activity. It has high affinity and selectivity for delta-type opioid receptors. The protein is Dermorphin-1 of Phyllomedusa sauvagei (Sauvage's leaf frog).